The chain runs to 75 residues: uncharacterized protein (75 aa).

The dksA C4-type zinc finger occupies 43–67 (CSECGLPIPTTRLRANPFAHRCVSC).

This is an uncharacterized protein from Haemophilus influenzae (strain ATCC 51907 / DSM 11121 / KW20 / Rd).